Reading from the N-terminus, the 105-residue chain is Large ribosomal subunit protein bL21 (105 aa).

It belongs to the bacterial ribosomal protein bL21 family. As to quaternary structure, part of the 50S ribosomal subunit. Contacts protein L20.

Its function is as follows. This protein binds to 23S rRNA in the presence of protein L20. This Rhizobium etli (strain CIAT 652) protein is Large ribosomal subunit protein bL21.